The sequence spans 457 residues: Siroheme synthase (457 aa).

Residues 1 to 204 form a precorrin-2 dehydrogenase /sirohydrochlorin ferrochelatase region; it reads MDHLPIFCQL…NDQKAITETT (204 aa). Residues 22–23 and 43–44 contribute to the NAD(+) site; these read DV and LA. At Ser-128 the chain carries Phosphoserine. The interval 216 to 457 is uroporphyrinogen-III C-methyltransferase; the sequence is GEVVLVGAGP…RDKLNWFSNH (242 aa). Residue Pro-225 participates in S-adenosyl-L-methionine binding. The active-site Proton acceptor is the Asp-248. Catalysis depends on Lys-270, which acts as the Proton donor. S-adenosyl-L-methionine is bound by residues 301 to 303, Ile-306, 331 to 332, Met-382, and Gly-411; these read GGD and TA.

The protein in the N-terminal section; belongs to the precorrin-2 dehydrogenase / sirohydrochlorin ferrochelatase family. This sequence in the C-terminal section; belongs to the precorrin methyltransferase family.

It carries out the reaction uroporphyrinogen III + 2 S-adenosyl-L-methionine = precorrin-2 + 2 S-adenosyl-L-homocysteine + H(+). The catalysed reaction is precorrin-2 + NAD(+) = sirohydrochlorin + NADH + 2 H(+). The enzyme catalyses siroheme + 2 H(+) = sirohydrochlorin + Fe(2+). It participates in cofactor biosynthesis; adenosylcobalamin biosynthesis; precorrin-2 from uroporphyrinogen III: step 1/1. Its pathway is cofactor biosynthesis; adenosylcobalamin biosynthesis; sirohydrochlorin from precorrin-2: step 1/1. It functions in the pathway porphyrin-containing compound metabolism; siroheme biosynthesis; precorrin-2 from uroporphyrinogen III: step 1/1. The protein operates within porphyrin-containing compound metabolism; siroheme biosynthesis; siroheme from sirohydrochlorin: step 1/1. It participates in porphyrin-containing compound metabolism; siroheme biosynthesis; sirohydrochlorin from precorrin-2: step 1/1. Its function is as follows. Multifunctional enzyme that catalyzes the SAM-dependent methylations of uroporphyrinogen III at position C-2 and C-7 to form precorrin-2 via precorrin-1. Then it catalyzes the NAD-dependent ring dehydrogenation of precorrin-2 to yield sirohydrochlorin. Finally, it catalyzes the ferrochelation of sirohydrochlorin to yield siroheme. In Escherichia coli (strain 55989 / EAEC), this protein is Siroheme synthase.